The following is a 505-amino-acid chain: Catalase (505 aa).

Active-site residues include His58 and Asn131. Heme is bound at residue Tyr341.

This sequence belongs to the catalase family. Requires heme as cofactor.

The enzyme catalyses 2 H2O2 = O2 + 2 H2O. Functionally, decomposes hydrogen peroxide into water and oxygen; serves to protect cells from the toxic effects of hydrogen peroxide. The polypeptide is Catalase (kat) (Methanosarcina barkeri (strain Fusaro / DSM 804)).